The primary structure comprises 488 residues: Multidrug resistance outer membrane protein MdtP (488 aa).

An N-terminal signal peptide occupies residues 1–23; the sequence is MINRQLSRLLLCSILGSTTLISG. A lipid anchor (N-palmitoyl cysteine) is attached at C24. Residue C24 is the site of S-diacylglycerol cysteine attachment.

Belongs to the outer membrane factor (OMF) (TC 1.B.17) family. In terms of assembly, could be part of a tripartite efflux system composed of MdtN, MdtO and MdtP.

The protein resides in the cell outer membrane. Could be involved in resistance to puromycin, acriflavine and tetraphenylarsonium chloride. The polypeptide is Multidrug resistance outer membrane protein MdtP (mdtP) (Shigella flexneri).